A 258-amino-acid chain; its full sequence is Acetylglutamate kinase (258 aa).

Residues 41-42 (GG), arginine 63, and asparagine 156 each bind substrate.

It belongs to the acetylglutamate kinase family. ArgB subfamily.

It is found in the cytoplasm. It carries out the reaction N-acetyl-L-glutamate + ATP = N-acetyl-L-glutamyl 5-phosphate + ADP. It functions in the pathway amino-acid biosynthesis; L-arginine biosynthesis; N(2)-acetyl-L-ornithine from L-glutamate: step 2/4. Its function is as follows. Catalyzes the ATP-dependent phosphorylation of N-acetyl-L-glutamate. This is Acetylglutamate kinase from Geobacillus kaustophilus (strain HTA426).